A 206-amino-acid chain; its full sequence is Pyridoxine/pyridoxamine 5'-phosphate oxidase (206 aa).

Residues 53 to 58 (RMVLLK), 68 to 69 (YT), K75, and Q97 contribute to the FMN site. Substrate is bound at residue K58. 3 residues coordinate substrate: Y115, R119, and S123. FMN is bound by residues 132–133 (QS) and W177. 183 to 185 (RLH) is a binding site for substrate. R187 is a binding site for FMN.

This sequence belongs to the pyridoxamine 5'-phosphate oxidase family. As to quaternary structure, homodimer. It depends on FMN as a cofactor.

The enzyme catalyses pyridoxamine 5'-phosphate + O2 + H2O = pyridoxal 5'-phosphate + H2O2 + NH4(+). The catalysed reaction is pyridoxine 5'-phosphate + O2 = pyridoxal 5'-phosphate + H2O2. It participates in cofactor metabolism; pyridoxal 5'-phosphate salvage; pyridoxal 5'-phosphate from pyridoxamine 5'-phosphate: step 1/1. The protein operates within cofactor metabolism; pyridoxal 5'-phosphate salvage; pyridoxal 5'-phosphate from pyridoxine 5'-phosphate: step 1/1. Its function is as follows. Catalyzes the oxidation of either pyridoxine 5'-phosphate (PNP) or pyridoxamine 5'-phosphate (PMP) into pyridoxal 5'-phosphate (PLP). This chain is Pyridoxine/pyridoxamine 5'-phosphate oxidase, found in Allorhizobium ampelinum (strain ATCC BAA-846 / DSM 112012 / S4) (Agrobacterium vitis (strain S4)).